Here is a 350-residue protein sequence, read N- to C-terminus: Peroxidase 10 (350 aa).

Residues methionine 1–serine 27 form the signal peptide. 4 disulfides stabilise this stretch: cysteine 57–cysteine 137, cysteine 90–cysteine 95, cysteine 143–cysteine 346, and cysteine 222–cysteine 256. Histidine 88 acts as the Proton acceptor in catalysis. The Ca(2+) site is built by aspartate 89, valine 92, glycine 94, aspartate 96, and serine 98. N-linked (GlcNAc...) asparagine glycosylation occurs at asparagine 102. Proline 185 is a binding site for substrate. Asparagine 193 carries N-linked (GlcNAc...) asparagine glycosylation. A heme b-binding site is contributed by histidine 215. Position 216 (threonine 216) interacts with Ca(2+). Ca(2+) contacts are provided by aspartate 270, serine 273, and aspartate 278.

The protein belongs to the peroxidase family. Classical plant (class III) peroxidase subfamily. It depends on heme b as a cofactor. Requires Ca(2+) as cofactor. Expressed in the whole plant, with the highest expression in roots.

It is found in the secreted. The enzyme catalyses 2 a phenolic donor + H2O2 = 2 a phenolic radical donor + 2 H2O. Functionally, removal of H(2)O(2), oxidation of toxic reductants, biosynthesis and degradation of lignin, suberization, auxin catabolism, response to environmental stresses such as wounding, pathogen attack and oxidative stress. These functions might be dependent on each isozyme/isoform in each plant tissue. The sequence is that of Peroxidase 10 (PER10) from Arabidopsis thaliana (Mouse-ear cress).